A 143-amino-acid chain; its full sequence is Small ribosomal subunit protein eS12 (143 aa).

This sequence belongs to the eukaryotic ribosomal protein eS12 family.

The sequence is that of Small ribosomal subunit protein eS12 (RPS12) from Hordeum vulgare (Barley).